A 384-amino-acid chain; its full sequence is Sphingosine 1-phosphate receptor 3 (384 aa).

Over 1-34 the chain is Extracellular; sequence MMINPLIYLHYNYTGKLDHRPTVGTSPGTRDPKT. Residue N12 is glycosylated (N-linked (GlcNAc...) asparagine). Residues 35–55 form a helical membrane-spanning segment; that stretch reads IAFLVVCSFIILENLTVLLAI. Residues 56 to 64 lie on the Cytoplasmic side of the membrane; sequence WKNHRFHNR. Residues 65-85 traverse the membrane as a helical segment; the sequence is MYFFIGNLALCDLLASVAYLV. At 86 to 105 the chain is on the extracellular side; sequence NLLLSGEKTLQLSPVLWFVR. Residues 106–126 form a helical membrane-spanning segment; it reads EGSMFVTLGASIFSLLAIAIE. Residues 127–144 are Cytoplasmic-facing; that stretch reads RHLTMIKMRPYDASKNYR. Residues 145-165 traverse the membrane as a helical segment; sequence VFLLIGTCWLVAVLLGALPIL. Topologically, residues 166–186 are extracellular; it reads GWNCLGNLPDCSTILPLYTKK. The chain crosses the membrane as a helical span at residues 187–207; that stretch reads YVAFCIIVFIVLLLAMSVLYA. At 208 to 235 the chain is on the cytoplasmic side; it reads RIYILVKSSSQKVSKHRNSEHAMSLLRT. The helical transmembrane segment at 236–256 threads the bilayer; it reads VIIVVGVFIACWMPIFVLLLL. Topologically, residues 257–271 are extracellular; it reads DVACERPCPILYKAD. The chain crosses the membrane as a helical span at residues 272 to 292; the sequence is WFIAVAVLNSAMNPIIYTLAS. The Cytoplasmic portion of the chain corresponds to 293–384; it reads REMRRAFLGL…REGEGGNGGR (92 aa). Composition is skewed to polar residues over residues 315-325 and 336-347; these read NDSGNKQFQEP and QTHPNQSQQSSR. Residues 315 to 384 form a disordered region; that stretch reads NDSGNKQFQE…REGEGGNGGR (70 aa). A compositionally biased stretch (basic and acidic residues) spans 349–359; sequence AELDREQETGH.

The protein belongs to the G-protein coupled receptor 1 family.

The protein resides in the cell membrane. In terms of biological role, receptor for the lysosphingolipid sphingosine 1-phosphate (S1P). This Takifugu rubripes (Japanese pufferfish) protein is Sphingosine 1-phosphate receptor 3 (s1pr3).